The sequence spans 482 residues: BTB/POZ domain and ankyrin repeat-containing protein NOOT1 (482 aa).

Positions 25 to 107 (SDVVFSVEGR…LYSGQVSIVP (83 aa)) constitute a BTB domain. Residues 113–127 (RPNCGDRGCWHTHCT) form a C2HC NPR-type zinc finger. Residues Cys-116, Cys-121, His-123, and Cys-126 each contribute to the Zn(2+) site. 4 ANK repeats span residues 249–278 (QKIRRMRRALDSSDVELVKLMVMGEGLNLD), 279–308 (EALALPYAVENCSREVVKALLELGAADVNF), 313–342 (TGKTPLHIAAEMVSPDMVAVLLDHHADPNV), and 346–380 (DGVTPLDILRTLTSDFLFKGAVPGLTHIEPNKLRL). The segment at 395–434 (EEGNNNNSNNNNNATASSATNMYPHHNMNEDHHHSHNNNN) is disordered. A compositionally biased stretch (low complexity) spans 398–415 (NNNNSNNNNNATASSATN).

This sequence belongs to the plant 'ANKYRIN-BTB/POZ' family. 'NOOT-BOP-COCH-like' (NBCL) subfamily. Homodimer. As to expression, expressed in the shoot apical meristem (SAM) at the base of the developing leaf where stipules are formed. Associated with functional and vestigial abscission zones (AZs), including pulvini.

Its subcellular location is the nucleus. It is found in the cytoplasm. The protein localises to the cell membrane. It participates in protein modification; protein ubiquitination. Its function is as follows. May act as a substrate-specific adapter of an E3 ubiquitin-protein ligase complex (CUL3-RBX1-BTB) which mediates the ubiquitination and subsequent proteasomal degradation of target proteins. Transcriptional co-regulator involved in the promotion of leaf and floral meristem fate and determinacy. Promotes normal stipule growth and development. Required for the abscission of senescent organs, probably by regulating the cell wall disorganization in abscission zones (AZs, e.g. pulvini at the base of leaves). Involved in the coordination of the symbiotic nodule developmental program. Promotes the formation of root nodules by interacting directly with APP1 to modulate the expression of the nuclear transcription factor Y subunit (NF-YA1), a key nodulin. Necessary for the robust maintenance of nodule identity throughout the nodule developmental program. Involved in the regulation of indeterminate nodule identity in association with NOOT2. The sequence is that of BTB/POZ domain and ankyrin repeat-containing protein NOOT1 from Medicago truncatula (Barrel medic).